Consider the following 531-residue polypeptide: Basal body-orientation factor 1 (531 aa).

The segment covering 1–19 (MPKLKVKAGKGKKGKRKKA) has biased composition (basic residues). The tract at residues 1–32 (MPKLKVKAGKGKKGKRKKAGKNEHRLDKESEV) is disordered. Residues 20-32 (GKNEHRLDKESEV) show a composition bias toward basic and acidic residues. Coiled coils occupy residues 26-213 (LDKE…AEKA) and 274-365 (VQEK…VESF). Positions 465 to 505 (QSRKSPGLKPSPPADVSSIKEKEINTSNLEEKPEESSSTFI) are disordered. Residues 482-499 (SIKEKEINTSNLEEKPEE) show a composition bias toward basic and acidic residues.

Belongs to the BBOF1 family. In terms of tissue distribution, multiciliated cells.

Its subcellular location is the cytoplasm. It is found in the cytoskeleton. The protein resides in the cilium basal body. In terms of biological role, basal body protein required in multiciliate cells to align and maintain cilia orientation in response to flow. May act by mediating a maturation step that stabilizes and aligns cilia orientation. Not required to respond to planar cell polarity (PCP) or flow-based orientation cues. The protein is Basal body-orientation factor 1 (ccdc176) of Xenopus laevis (African clawed frog).